The sequence spans 843 residues: RNA-binding protein 25 (843 aa).

The tract at residues 1 to 30 (MSFPPHLNRPPMGIPALPPGIPPPQFPGFP) is disordered. The span at 12–30 (MGIPALPPGIPPPQFPGFP) shows a compositional bias: pro residues. In terms of domain architecture, RRM spans 87-164 (TTVFVGNISE…KKLLVKVDAK (78 aa)). Lys-135 bears the N6-acetyllysine mark. 2 disordered regions span residues 171–202 (EWKAKKKASNGNARPETVTNDDEEALDEETKR) and 219–243 (SSELNAPSQESDSHPRKKKKEKKED). Residues Ser-226 and Ser-229 each carry the phosphoserine modification. Glycyl lysine isopeptide (Lys-Gly) (interchain with G-Cter in SUMO2) cross-links involve residues Lys-261, Lys-273, and Lys-430. 2 stretches are compositionally biased toward basic and acidic residues: residues 280 to 433 (EISK…KRDR) and 521 to 573 (RLRD…ERRR). 2 disordered regions span residues 280-442 (EISK…DAYE) and 498-688 (EFLE…KRKK). Residues 285–644 (RDTHKKLEEE…PNTPGDESPC (360 aa)) form a necessary for nuclear speckle localization region. A Glycyl lysine isopeptide (Lys-Gly) (interchain with G-Cter in SUMO2) cross-link involves residue Lys-578. Ser-583 carries the post-translational modification Phosphoserine. Over residues 590 to 599 (KQEKEEKREE) the composition is skewed to basic and acidic residues. Over residues 621–630 (SSAPSVSSAS) the composition is skewed to low complexity. Lys-671 is covalently cross-linked (Glycyl lysine isopeptide (Lys-Gly) (interchain with G-Cter in SUMO2)). Over residues 674–683 (ASNSPGQPNS) the composition is skewed to polar residues. 2 positions are modified to phosphoserine: Ser-677 and Ser-683. Glycyl lysine isopeptide (Lys-Gly) (interchain with G-Cter in SUMO2) cross-links involve residues Lys-688 and Lys-697. Ser-703 carries the phosphoserine modification. Lys-722 is covalently cross-linked (Glycyl lysine isopeptide (Lys-Gly) (interchain with G-Cter in SUMO2)). The 94-residue stretch at 750 to 843 (PELFAYPLDW…TEAKKIGLVK (94 aa)) folds into the PWI domain.

As to quaternary structure, interacts with LUC7L3 and SRRM1. Specifically associates with functional splicing complexes, including Sm proteins and U1, U2, U4, U5 and U6 snRNAs. Associates with exon junction complex (EJC) proteins, including APEX1, DDX39B, NCBP1, RBM8A and RNPS1. Interaction with NCBP1 is RNA-dependent. Post-translationally, sumoylated.

The protein localises to the nucleus speckle. Its subcellular location is the cytoplasm. Functionally, RNA-binding protein that acts as a regulator of alternative pre-mRNA splicing. Involved in apoptotic cell death through the regulation of the apoptotic factor BCL2L1 isoform expression. Modulates the ratio of proapoptotic BCL2L1 isoform S to antiapoptotic BCL2L1 isoform L mRNA expression. When overexpressed, stimulates proapoptotic BCL2L1 isoform S 5'-splice site (5'-ss) selection, whereas its depletion caused the accumulation of antiapoptotic BCL2L1 isoform L. Promotes BCL2L1 isoform S 5'-ss usage through the 5'-CGGGCA-3' RNA sequence. Its association with LUC7L3 promotes U1 snRNP binding to a weak 5' ss in a 5'-CGGGCA-3'-dependent manner. Binds to the exonic splicing enhancer 5'-CGGGCA-3' RNA sequence located within exon 2 of the BCL2L1 pre-mRNA. Also involved in the generation of an abnormal and truncated splice form of SCN5A in heart failure. This chain is RNA-binding protein 25 (RBM25), found in Homo sapiens (Human).